A 605-amino-acid chain; its full sequence is Insulin-like growth factor-binding protein complex acid labile subunit (605 aa).

The N-terminal stretch at 1–27 is a signal peptide; the sequence is MALRKGGLALALLLLSWVALGPRSLEG. One can recognise an LRRNT domain in the interval 32 to 74; the sequence is TPGEAEGPACPATCACSYDDEVNELSVFCSSRNLTRLPDGIPG. Intrachain disulfides connect Cys-41-Cys-47 and Cys-45-Cys-60. Residues Asn-64, Asn-85, and Asn-96 are each glycosylated (N-linked (GlcNAc...) asparagine). LRR repeat units lie at residues 75-96, 99-120, 123-144, 147-168, 171-192, 195-216, 219-240, 243-264, 267-288, 291-312, 315-336, 339-360, 363-384, 387-408, 411-432, 435-456, 459-480, 483-504, and 507-528; these read GTQA…AFRN, SLAF…ALLG, NLCH…TFAY, ALAL…LFEG, NLWD…AFRG, GLRE…LFSG, ELRE…VFAQ, RLQK…AFLG, ALRW…TFPG, GLRV…TFED, FLEE…SFEG, QLEV…AFLG, NVAV…VFRG, KLHS…TFAG, GLRR…SLWG, ELLE…LFQG, KLEY…ALGP, RAFW…LLAS, and RLRY…PPGL. N-linked (GlcNAc...) asparagine glycosylation is present at Asn-368. Residue Asn-515 is glycosylated (N-linked (GlcNAc...) asparagine). An LRRCT domain is found at 536 to 605; the sequence is NPWDCSCPLK…DLGEAHFAPC (70 aa). 3 disulfides stabilise this stretch: Cys-540–Cys-583, Cys-542–Cys-605, and Cys-566–Cys-571. An N-linked (GlcNAc...) asparagine glycan is attached at Asn-580.

Forms a ternary complex with IGF1 and IGFBP3.

It is found in the secreted. The protein localises to the extracellular space. Functionally, involved in protein-protein interactions that result in protein complexes, receptor-ligand binding or cell adhesion. This chain is Insulin-like growth factor-binding protein complex acid labile subunit (IGFALS), found in Papio hamadryas (Hamadryas baboon).